The sequence spans 77 residues: Large ribosomal subunit protein eL14 (77 aa).

It belongs to the eukaryotic ribosomal protein eL14 family.

The protein is Large ribosomal subunit protein eL14 of Methanococcus vannielii (strain ATCC 35089 / DSM 1224 / JCM 13029 / OCM 148 / SB).